We begin with the raw amino-acid sequence, 229 residues long: Large ribosomal subunit protein uL1 (229 aa).

It belongs to the universal ribosomal protein uL1 family. In terms of assembly, part of the 50S ribosomal subunit.

Its function is as follows. Binds directly to 23S rRNA. The L1 stalk is quite mobile in the ribosome, and is involved in E site tRNA release. Functionally, protein L1 is also a translational repressor protein, it controls the translation of the L11 operon by binding to its mRNA. This chain is Large ribosomal subunit protein uL1, found in Rhodopseudomonas palustris (strain BisB5).